The following is a 1259-amino-acid chain: Trafficking protein particle complex II-specific subunit 130 homolog (1259 aa).

An N-acetylalanine modification is found at Ala-2. The tract at residues 479 to 526 (GNIPEMFDGRPSFTEGSGLEASPRTPSSLKVQAPPMSRTNSSPGNFES) is disordered.

This sequence belongs to the TMEM1 family. As to quaternary structure, part of the multisubunit TRAPP (transport protein particle) II complex composed of BET3, BET5, TRS20, TRS23, TRS31, TRS33, TRS65, TRS85, TRS120 and TRS130.

Its subcellular location is the golgi apparatus. The protein localises to the trans-Golgi network. The protein resides in the early endosome. Specific subunit of the TRAPP II complex, a highly conserved vesicle tethering complex that is required for the proper transport of proteins in post-Golgi trafficking pathways to the growing cell plate in mitotic active cells. Required for the polarized and selective transport of PIN2, but not PIN1, to the plasma membrane. Not required for ER-to-Golgi as well as biosynthetic and endocytic vacuolar transport. The polypeptide is Trafficking protein particle complex II-specific subunit 130 homolog (Arabidopsis thaliana (Mouse-ear cress)).